We begin with the raw amino-acid sequence, 157 residues long: Ribosomal RNA large subunit methyltransferase H (157 aa).

S-adenosyl-L-methionine is bound by residues leucine 73, glycine 105, and 124–129 (MSKMTF).

This sequence belongs to the RNA methyltransferase RlmH family. As to quaternary structure, homodimer.

It is found in the cytoplasm. It catalyses the reaction pseudouridine(1915) in 23S rRNA + S-adenosyl-L-methionine = N(3)-methylpseudouridine(1915) in 23S rRNA + S-adenosyl-L-homocysteine + H(+). Its function is as follows. Specifically methylates the pseudouridine at position 1915 (m3Psi1915) in 23S rRNA. The protein is Ribosomal RNA large subunit methyltransferase H of Bacteroides thetaiotaomicron (strain ATCC 29148 / DSM 2079 / JCM 5827 / CCUG 10774 / NCTC 10582 / VPI-5482 / E50).